The sequence spans 613 residues: V-type proton ATPase catalytic subunit A isoform 1 (613 aa).

240-247 (GAFGCGKT) contributes to the ATP binding site.

It belongs to the ATPase alpha/beta chains family. V-ATPase is a heteromultimeric enzyme composed of a peripheral catalytic V1 complex (main components: subunits A, B, C, D, E, and F) attached to an integral membrane V0 proton pore complex (main component: the proteolipid protein).

It carries out the reaction ATP + H2O + 4 H(+)(in) = ADP + phosphate + 5 H(+)(out). In terms of biological role, catalytic subunit of the peripheral V1 complex of vacuolar ATPase. V-ATPase vacuolar ATPase is responsible for acidifying a variety of intracellular compartments in eukaryotic cells. The sequence is that of V-type proton ATPase catalytic subunit A isoform 1 from Acetabularia acetabulum (Mermaid's wine glass).